A 239-amino-acid chain; its full sequence is Large ribosomal subunit protein uL2 (239 aa).

The segment at 202–239 (HGGGSHQHVGRPSTVARNTPPGRKVGHIAARRTGRRKG) is disordered. A compositionally biased stretch (basic residues) spans 225-239 (KVGHIAARRTGRRKG).

The protein belongs to the universal ribosomal protein uL2 family. As to quaternary structure, part of the 50S ribosomal subunit. Forms a bridge to the 30S subunit in the 70S ribosome.

Its function is as follows. One of the primary rRNA binding proteins. Required for association of the 30S and 50S subunits to form the 70S ribosome, for tRNA binding and peptide bond formation. It has been suggested to have peptidyltransferase activity; this is somewhat controversial. Makes several contacts with the 16S rRNA in the 70S ribosome. The chain is Large ribosomal subunit protein uL2 from Desulfurococcus amylolyticus (strain DSM 18924 / JCM 16383 / VKM B-2413 / 1221n) (Desulfurococcus kamchatkensis).